Consider the following 190-residue polypeptide: Pyridoxal 5'-phosphate synthase subunit PdxT (190 aa).

46 to 48 (GES) is an L-glutamine binding site. Cysteine 78 (nucleophile) is an active-site residue. Residues arginine 105 and 134–135 (IR) contribute to the L-glutamine site. Residues histidine 170 and glutamate 172 each act as charge relay system in the active site.

It belongs to the glutaminase PdxT/SNO family. As to quaternary structure, in the presence of PdxS, forms a dodecamer of heterodimers. Only shows activity in the heterodimer.

The enzyme catalyses aldehydo-D-ribose 5-phosphate + D-glyceraldehyde 3-phosphate + L-glutamine = pyridoxal 5'-phosphate + L-glutamate + phosphate + 3 H2O + H(+). It carries out the reaction L-glutamine + H2O = L-glutamate + NH4(+). It participates in cofactor biosynthesis; pyridoxal 5'-phosphate biosynthesis. Functionally, catalyzes the hydrolysis of glutamine to glutamate and ammonia as part of the biosynthesis of pyridoxal 5'-phosphate. The resulting ammonia molecule is channeled to the active site of PdxS. The polypeptide is Pyridoxal 5'-phosphate synthase subunit PdxT (Clostridium beijerinckii (strain ATCC 51743 / NCIMB 8052) (Clostridium acetobutylicum)).